The sequence spans 82 residues: Putative membrane protein insertion efficiency factor (82 aa).

The tract at residues 61–82 (HEGGYDPVPKRKNKNSEGKREE) is disordered.

Belongs to the UPF0161 family.

It is found in the cell inner membrane. In terms of biological role, could be involved in insertion of integral membrane proteins into the membrane. The sequence is that of Putative membrane protein insertion efficiency factor from Fusobacterium nucleatum subsp. nucleatum (strain ATCC 25586 / DSM 15643 / BCRC 10681 / CIP 101130 / JCM 8532 / KCTC 2640 / LMG 13131 / VPI 4355).